We begin with the raw amino-acid sequence, 523 residues long: Calcium-dependent protein kinase 28 (523 aa).

Residue Gly2 is the site of N-myristoyl glycine attachment. Cys4 carries S-palmitoyl cysteine lipidation. Residues 15 to 43 form a disordered region; that stretch reads SSRRSSQTKSKAAPTPIDTKASTKRRTGS. The Protein kinase domain occupies 62-322; it reads YTIGKLLGHG…AAQALSHAWV (261 aa). Residues 68-76 and Lys91 contribute to the ATP site; that span reads LGHGQFGYT. The active-site Proton acceptor is the Asp188. Phosphoserine occurs at positions 228 and 318. The autoinhibitory domain stretch occupies residues 328-358; that stretch reads ATDIPVDISVLNNLRQFVRYSRLKQFALRAL. EF-hand domains are found at residues 365–400, 402–437, 444–479, and 482–509; these read AEISDLRDQFDAIDVDKNGVISLEEMRQALAKDLPW, LKDSRVAEILEAIDSNTDGLVDFTEFVAAALHVHQL, KWQLRSRAAFEKFDLDKDGYITPEELRMHTGLRGSI, and LLDEADIDRDGKISLHEFRRLLRTASIS. Asp378, Asp380, Asn382, Glu389, Asp415, Asn417, Asp419, Glu426, Asp457, Asp459, Asp461, Tyr463, Glu468, Asp487, Asp489, Asp491, and Lys493 together coordinate Ca(2+). Ser495 bears the Phosphoserine mark. Residue Glu498 coordinates Ca(2+). Ser515 carries the post-translational modification Phosphoserine.

The protein belongs to the protein kinase superfamily. Ser/Thr protein kinase family. CDPK subfamily. Interacts with BIK1. Expressed in vascular and meristematic tissues throughout plant development.

The protein resides in the cell membrane. It catalyses the reaction L-seryl-[protein] + ATP = O-phospho-L-seryl-[protein] + ADP + H(+). The enzyme catalyses L-threonyl-[protein] + ATP = O-phospho-L-threonyl-[protein] + ADP + H(+). Activated by calcium. Autophosphorylation plays an important role in the regulation of the kinase activity. In terms of biological role, may play a role in signal transduction pathways that involve calcium as a second messenger. Acts as a developmentally controlled regulator for coordinated stem elongation and vascular development. Acts as a key component which contributes to the developmental switch that establishes the transition from vegetative to reproductive growth. Involved in pathogen-associated molecular pattern (PAMP)-triggered immunity (PTI) signaling. Interacts with and phosphorylates the kinase BIK1, a central rate-limiting kinase in PTI signaling. Facilitates BIK1 turnover and negatively regulates BIK1-mediated immune responses triggered by several PAMPs. Its kinase activity is necessary and sufficient for its function in PTI signaling. This chain is Calcium-dependent protein kinase 28, found in Arabidopsis thaliana (Mouse-ear cress).